The chain runs to 82 residues: Small ribosomal subunit protein uS17 (82 aa).

This sequence belongs to the universal ribosomal protein uS17 family. In terms of assembly, part of the 30S ribosomal subunit.

Its function is as follows. One of the primary rRNA binding proteins, it binds specifically to the 5'-end of 16S ribosomal RNA. This Phenylobacterium zucineum (strain HLK1) protein is Small ribosomal subunit protein uS17.